The chain runs to 632 residues: Bestrophin homolog 24 (632 aa).

4 consecutive transmembrane segments (helical) span residues 28-48 (IWKA…ILSV), 83-103 (GFFV…IGFI), 234-254 (IMYP…CLLA), and 271-291 (LYFP…MKVA). Disordered regions lie at residues 491 to 516 (LSNK…EHPF) and 562 to 632 (ETEV…TKFE). The span at 563–602 (TEVKRDEKKKKEEELREEGDNGKEEKDNKEDKKEEQDRPS) shows a compositional bias: basic and acidic residues. Basic residues predominate over residues 623 to 632 (PHLRPPTKFE).

It belongs to the anion channel-forming bestrophin (TC 1.A.46) family. Calcium-sensitive chloride channel subfamily. Forms oligomers.

It is found in the cell membrane. Functionally, forms chloride channels. This chain is Bestrophin homolog 24 (best-24), found in Caenorhabditis elegans.